The chain runs to 262 residues: MSRSNQEALADFVADAPPGELNQVVEAISTVVDGNSSILSKLETDVHNKILDQCMVVSLGKSKSLVSKYNQLSKDTFYDSQSGQKFEFDFDTKKATPSGSHGSDSPIQGALDKYFSAHFPSEGAAGVFPQDDGSIALVLVDGKYNPANYWNGKWRSVYIFESGSLSGTIDVDVHYYEDGNVRLKSSEKVDLGSVSESDIVDAISKAEQQFQEKLNKSFNGLNEDSFKALRRQLPVTRSKINWGKSISNYRLGKDINVGGGRE.

The protein belongs to the F-actin-capping protein alpha subunit family. Heterodimer of an alpha and a beta subunit.

It localises to the cytoplasm. Its subcellular location is the cytoskeleton. Functionally, F-actin-capping proteins bind in a Ca(2+)-independent manner to the fast growing ends of actin filaments (barbed end) thereby blocking the exchange of subunits at these ends. Unlike other capping proteins (such as gelsolin and severin), these proteins do not sever actin filaments. This Yarrowia lipolytica (strain CLIB 122 / E 150) (Yeast) protein is F-actin-capping protein subunit alpha (CAP1).